Here is a 141-residue protein sequence, read N- to C-terminus: ATP synthase epsilon chain (141 aa).

This sequence belongs to the ATPase epsilon chain family. In terms of assembly, F-type ATPases have 2 components, CF(1) - the catalytic core - and CF(0) - the membrane proton channel. CF(1) has five subunits: alpha(3), beta(3), gamma(1), delta(1), epsilon(1). CF(0) has three main subunits: a, b and c.

Its subcellular location is the cell inner membrane. Produces ATP from ADP in the presence of a proton gradient across the membrane. In Pseudomonas fluorescens (strain ATCC BAA-477 / NRRL B-23932 / Pf-5), this protein is ATP synthase epsilon chain.